We begin with the raw amino-acid sequence, 507 residues long: Serine/threonine-protein kinase BSK11 (507 aa).

G2 carries N-myristoyl glycine lipidation. The span at 16–26 (DKKITSDDLSG) shows a compositional bias: basic and acidic residues. The disordered stretch occupies residues 16 to 44 (DKKITSDDLSGRRGKGAKRGNRHRHANIN). Residues 27–41 (RRGKGAKRGNRHRHA) are compositionally biased toward basic residues. Residues 75–332 (NAVVSVCSDQ…GDIISVITTL (258 aa)) form the Protein kinase domain. ATP-binding positions include 81-89 (CSDQEPNLV) and K106. D200 (proton acceptor) is an active-site residue.

It belongs to the protein kinase superfamily. Ser/Thr protein kinase family. In terms of assembly, interacts with BRI1, ASK7/BIN2, BSK1, BSK6 and BSK8. Phosphorylated by BRI1, ASK7/BIN2 and ASK9/BIL2.

The protein localises to the cell membrane. It catalyses the reaction L-seryl-[protein] + ATP = O-phospho-L-seryl-[protein] + ADP + H(+). It carries out the reaction L-threonyl-[protein] + ATP = O-phospho-L-threonyl-[protein] + ADP + H(+). In terms of biological role, probable serine/threonine kinase that acts as a positive regulator of brassinosteroid (BR) signaling downstream of the receptor kinase BRI1. The sequence is that of Serine/threonine-protein kinase BSK11 from Arabidopsis thaliana (Mouse-ear cress).